The following is a 106-amino-acid chain: Small ribosomal subunit protein bS20 (106 aa).

Residues 1–20 (MATAKPKKKNPRLASGRKRV) are compositionally biased toward basic residues. The tract at residues 1–21 (MATAKPKKKNPRLASGRKRVR) is disordered.

The protein belongs to the bacterial ribosomal protein bS20 family.

Its function is as follows. Binds directly to 16S ribosomal RNA. The chain is Small ribosomal subunit protein bS20 from Polaromonas naphthalenivorans (strain CJ2).